A 148-amino-acid chain; its full sequence is Large ribosomal subunit protein uL15 (148 aa).

Positions 1-30 (MPSRLRKTRKLRGHVSHGHGRIGKHRKHPG) are enriched in basic residues. Residues 1–39 (MPSRLRKTRKLRGHVSHGHGRIGKHRKHPGGRGNAGGLH) form a disordered region. At histidine 39 the chain carries (3S)-3-hydroxyhistidine. 2 positions are modified to N6-acetyllysine: lysine 47 and lysine 55. At serine 68 the chain carries Phosphoserine. An N6-acetyllysine modification is found at lysine 110.

Belongs to the universal ribosomal protein uL15 family. As to quaternary structure, component of the large ribosomal subunit. Hydroxylated on His-39 by MINA.

The protein resides in the cytoplasm. Component of the large ribosomal subunit. The ribosome is a large ribonucleoprotein complex responsible for the synthesis of proteins in the cell. The protein is Large ribosomal subunit protein uL15 (RPL27A) of Macaca fascicularis (Crab-eating macaque).